Here is a 75-residue protein sequence, read N- to C-terminus: Small ribosomal subunit protein bS18 (75 aa).

This sequence belongs to the bacterial ribosomal protein bS18 family. Part of the 30S ribosomal subunit. Forms a tight heterodimer with protein bS6.

In terms of biological role, binds as a heterodimer with protein bS6 to the central domain of the 16S rRNA, where it helps stabilize the platform of the 30S subunit. The polypeptide is Small ribosomal subunit protein bS18 (Cereibacter sphaeroides (strain ATCC 17029 / ATH 2.4.9) (Rhodobacter sphaeroides)).